Consider the following 1156-residue polypeptide: Chromosome partition protein Smc (1156 aa).

37 to 44 is a binding site for ATP; sequence PNGAGKSN. Residues 167-499 are a coiled coil; sequence SGIGEYERKK…AIEREVRSFS (333 aa). An SMC hinge domain is found at 509–624; the sequence is KGVYGSVSEL…VENFESAKAI (116 aa). A coiled-coil region spans residues 654 to 1001; the sequence is GELNKRYYEE…EETENKKRKV (348 aa).

Belongs to the SMC family. As to quaternary structure, homodimer.

It localises to the cytoplasm. Its function is as follows. Required for chromosome condensation and partitioning. This Aquifex aeolicus (strain VF5) protein is Chromosome partition protein Smc.